We begin with the raw amino-acid sequence, 197 residues long: Small ribosomal subunit protein uS4B (197 aa).

Positions 88–150 constitute an S4 RNA-binding domain; it reads SRLDNMVYRM…SRKTEMFVNN (63 aa).

This sequence belongs to the universal ribosomal protein uS4 family. In terms of assembly, part of the 30S ribosomal subunit. Contacts protein S5. The interaction surface between S4 and S5 is involved in control of translational fidelity.

One of the primary rRNA binding proteins, it binds directly to 16S rRNA where it nucleates assembly of the body of the 30S subunit. In terms of biological role, with S5 and S12 plays an important role in translational accuracy. The chain is Small ribosomal subunit protein uS4B from Clostridium perfringens (strain ATCC 13124 / DSM 756 / JCM 1290 / NCIMB 6125 / NCTC 8237 / Type A).